A 94-amino-acid chain; its full sequence is Putative toxin RelE4 (94 aa).

It belongs to the RelE toxin family.

In terms of biological role, toxic component of a type II toxin-antitoxin (TA) system. Its cognate antitoxin is RelB4 (Potential). The protein is Putative toxin RelE4 (relE4) of Methanocaldococcus jannaschii (strain ATCC 43067 / DSM 2661 / JAL-1 / JCM 10045 / NBRC 100440) (Methanococcus jannaschii).